The primary structure comprises 298 residues: uncharacterized protein (298 aa).

The next 10 helical transmembrane spans lie at 9 to 28, 38 to 60, 72 to 94, 104 to 121, 128 to 145, 150 to 167, 174 to 196, 211 to 233, 240 to 262, and 272 to 291; these read GYVL…LYFK, IIVQ…WKHP, RFVV…VWAV, LGYY…MLLL, LQWL…QQVW, LPWV…YGLI, AALP…WLLF, PEAL…FNAA, ATLG…LLFG, and AFAF…WRSL. In terms of domain architecture, EamA spans 18–141; it reads VIWGLFPLYF…AVALASLGVA (124 aa).

It belongs to the EamA transporter family.

Its subcellular location is the cell membrane. This is an uncharacterized protein from Pseudomonas aeruginosa (strain ATCC 15692 / DSM 22644 / CIP 104116 / JCM 14847 / LMG 12228 / 1C / PRS 101 / PAO1).